The primary structure comprises 251 residues: Large ribosomal subunit protein uL16m (251 aa).

The N-terminal 29 residues, 1 to 29, are a transit peptide targeting the mitochondrion; sequence MWRLLARASAPLLRVPLSDSWALLPASAG.

The protein belongs to the universal ribosomal protein uL16 family. Component of the mitochondrial large ribosomal subunit (mt-LSU). Mature mammalian 55S mitochondrial ribosomes consist of a small (28S) and a large (39S) subunit. The 28S small subunit contains a 12S ribosomal RNA (12S mt-rRNA) and 30 different proteins. The 39S large subunit contains a 16S rRNA (16S mt-rRNA), a copy of mitochondrial valine transfer RNA (mt-tRNA(Val)), which plays an integral structural role, and 52 different proteins.

It is found in the mitochondrion. In Homo sapiens (Human), this protein is Large ribosomal subunit protein uL16m (MRPL16).